Here is a 97-residue protein sequence, read N- to C-terminus: UPF0235 protein AZOSEA09540 (97 aa).

Belongs to the UPF0235 family.

The protein is UPF0235 protein AZOSEA09540 of Aromatoleum aromaticum (strain DSM 19018 / LMG 30748 / EbN1) (Azoarcus sp. (strain EbN1)).